Here is a 171-residue protein sequence, read N- to C-terminus: EDPGTMGPGNPAPSPDSDTPSDSSKGSDSNPALLLVGNAAPPVHKKDSVVWPAWVYCTRYSDRPSSGPRTRKLKKKKSEKEDKRPRTAFTAEQLQRLKAEFQANRYITEQRRQTLAQELSLNESQIKIWFQNKRAKIKKASGMKNGLALHLMAQGLYNHSTTTVQEKEESE.

2 disordered regions span residues glutamate 1–proline 41 and tyrosine 60–arginine 86. Over residues proline 15–serine 29 the composition is skewed to low complexity. Residues aspartate 82–serine 141 constitute a DNA-binding region (homeobox).

Belongs to the engrailed homeobox family.

It localises to the nucleus. Its function is as follows. Required for proper formation of the apical ectodermal ridge and correct dorsal-ventral patterning in the limb. This chain is Homeobox protein engrailed-1-B (en1-b), found in Xenopus laevis (African clawed frog).